A 427-amino-acid chain; its full sequence is uncharacterized protein (427 aa).

The protein belongs to the MG032/MG096/MG288 family.

This is an uncharacterized protein from Mycoplasma pneumoniae (strain ATCC 29342 / M129 / Subtype 1) (Mycoplasmoides pneumoniae).